A 318-amino-acid polypeptide reads, in one-letter code: Acetyl-coenzyme A carboxylase carboxyl transferase subunit alpha (318 aa).

Residues 31-292 (DLIKEVSALE…KDAILRQLEL (262 aa)) form the CoA carboxyltransferase C-terminal domain.

The protein belongs to the AccA family. In terms of assembly, acetyl-CoA carboxylase is a heterohexamer composed of biotin carboxyl carrier protein (AccB), biotin carboxylase (AccC) and two subunits each of ACCase subunit alpha (AccA) and ACCase subunit beta (AccD).

Its subcellular location is the cytoplasm. The enzyme catalyses N(6)-carboxybiotinyl-L-lysyl-[protein] + acetyl-CoA = N(6)-biotinyl-L-lysyl-[protein] + malonyl-CoA. Its pathway is lipid metabolism; malonyl-CoA biosynthesis; malonyl-CoA from acetyl-CoA: step 1/1. Component of the acetyl coenzyme A carboxylase (ACC) complex. First, biotin carboxylase catalyzes the carboxylation of biotin on its carrier protein (BCCP) and then the CO(2) group is transferred by the carboxyltransferase to acetyl-CoA to form malonyl-CoA. This is Acetyl-coenzyme A carboxylase carboxyl transferase subunit alpha from Hydrogenovibrio crunogenus (strain DSM 25203 / XCL-2) (Thiomicrospira crunogena).